Here is a 339-residue protein sequence, read N- to C-terminus: Ketol-acid reductoisomerase (NADP(+)) (339 aa).

In terms of domain architecture, KARI N-terminal Rossmann spans 1-182 (MRVYYDRDAD…GGGRSGIIET (182 aa)). Residues 24–27 (YGSQ), Lys48, Ser51, Thr53, and 83–86 (DELQ) contribute to the NADP(+) site. His108 is a catalytic residue. NADP(+) is bound at residue Gly134. The KARI C-terminal knotted domain occupies 183 to 328 (NFREECETDL…AKLRAMMPWI (146 aa)). Asp191, Glu195, Glu227, and Glu231 together coordinate Mg(2+). Ser252 contacts substrate.

The protein belongs to the ketol-acid reductoisomerase family. The cofactor is Mg(2+).

It catalyses the reaction (2R)-2,3-dihydroxy-3-methylbutanoate + NADP(+) = (2S)-2-acetolactate + NADPH + H(+). The enzyme catalyses (2R,3R)-2,3-dihydroxy-3-methylpentanoate + NADP(+) = (S)-2-ethyl-2-hydroxy-3-oxobutanoate + NADPH + H(+). It functions in the pathway amino-acid biosynthesis; L-isoleucine biosynthesis; L-isoleucine from 2-oxobutanoate: step 2/4. It participates in amino-acid biosynthesis; L-valine biosynthesis; L-valine from pyruvate: step 2/4. In terms of biological role, involved in the biosynthesis of branched-chain amino acids (BCAA). Catalyzes an alkyl-migration followed by a ketol-acid reduction of (S)-2-acetolactate (S2AL) to yield (R)-2,3-dihydroxy-isovalerate. In the isomerase reaction, S2AL is rearranged via a Mg-dependent methyl migration to produce 3-hydroxy-3-methyl-2-ketobutyrate (HMKB). In the reductase reaction, this 2-ketoacid undergoes a metal-dependent reduction by NADPH to yield (R)-2,3-dihydroxy-isovalerate. This chain is Ketol-acid reductoisomerase (NADP(+)), found in Mesorhizobium japonicum (strain LMG 29417 / CECT 9101 / MAFF 303099) (Mesorhizobium loti (strain MAFF 303099)).